The chain runs to 494 residues: Tripartite motif-containing protein 5 (494 aa).

Residue alanine 2 is modified to N-acetylalanine. Residues 15-59 (CPICLELLTQPLSLDCGHSFCQACLTANHKTSMPDEGERSCPVCR) form an RING-type zinc finger. Serine 86 carries the phosphoserine modification. Residues 91–133 (QKVDHCARHGEKLLLFCREDRKVICWLCERSQEHRGHHTFLTE) form a B box-type zinc finger. 4 residues coordinate Zn(2+): cysteine 96, histidine 99, cysteine 118, and histidine 124. The stretch at 132–241 (TEEVAQEYQV…LISDLEHRLQ (110 aa)) forms a coiled coil. A required for interaction with GABARAP and for autophagy region spans residues 186 to 199 (FEQLRHILDWVESN). In terms of domain architecture, B30.2/SPRY spans 282-494 (LKVMLKKLRE…VPMTLCSPSS (213 aa)).

The protein belongs to the TRIM/RBCC family. As to quaternary structure, can form homodimers and homotrimers. In addition to lower-order dimerization, also exhibits a higher-order multimerization and both low- and high-order multimerizations are essential for its restriction activity. Interacts with BTBD1 and BTBD2. Interacts with PSMC4, PSMC5, PSMD7 and HSPA8/HSC70. Interacts (via B30.2/SPRY domain) with HSPA1A/B. Interacts with PSMC2, MAP3K7/TAK1, TAB2 and TAB3. Interacts with SQSTM1. Interacts with TRIM6 and TRIM34. Interacts with ULK1 (phosphorylated form), GABARAP, GABARAPL1, GABARAPL2, MAP1LC3A, MAP1LC3C and BECN1. Post-translationally, degraded in a proteasome-independent fashion in the absence of viral infection but in a proteasome-dependent fashion following exposure to restriction sensitive virus. In terms of processing, autoubiquitinated in a RING finger- and UBE2D2-dependent manner. Monoubiquitinated by TRIM21. Deubiquitinated by Yersinia YopJ. Ubiquitination may not lead to proteasomal degradation.

The protein resides in the cytoplasm. It is found in the nucleus. It carries out the reaction S-ubiquitinyl-[E2 ubiquitin-conjugating enzyme]-L-cysteine + [acceptor protein]-L-lysine = [E2 ubiquitin-conjugating enzyme]-L-cysteine + N(6)-ubiquitinyl-[acceptor protein]-L-lysine.. It participates in protein modification; protein ubiquitination. Functionally, capsid-specific restriction factor that prevents infection from non-host-adapted retroviruses. Blocks viral replication early in the life cycle, after viral entry but before reverse transcription. In addition to acting as a capsid-specific restriction factor, also acts as a pattern recognition receptor that activates innate immune signaling in response to the retroviral capsid lattice. Binding to the viral capsid triggers its E3 ubiquitin ligase activity, and in concert with the heterodimeric ubiquitin conjugating enzyme complex UBE2V1-UBE2N (also known as UBC13-UEV1A complex) generates 'Lys-63'-linked polyubiquitin chains, which in turn are catalysts in the autophosphorylation of the MAP3K7/TAK1 complex (includes TAK1, TAB2, and TAB3). Activation of the MAP3K7/TAK1 complex by autophosphorylation results in the induction and expression of NF-kappa-B and MAPK-responsive inflammatory genes, thereby leading to an innate immune response in the infected cell. Plays a role in regulating autophagy through activation of autophagy regulator BECN1 by causing its dissociation from its inhibitors BCL2 and TAB2. The sequence is that of Tripartite motif-containing protein 5 (TRIM5) from Nomascus leucogenys (Northern white-cheeked gibbon).